Here is a 454-residue protein sequence, read N- to C-terminus: DNA primase small subunit (454 aa).

Catalysis depends on residues Glu-66, Asp-131, and Asp-133. Mg(2+) is bound by residues Asp-131 and Asp-133. Asp-131 and Asp-133 together coordinate Mn(2+). 131–133 (DID) is an a ribonucleoside 5'-triphosphate binding site. Positions 143, 144, 150, and 153 each coordinate Zn(2+). The Zinc knuckle motif signature appears at 143-153 (CCSKTNICEKC). 182–188 (SGRRGIH) provides a ligand contact to a ribonucleoside 5'-triphosphate. Asp-333 is a binding site for Mg(2+). Asp-333 is a binding site for Mn(2+). 342 to 345 (HLLK) provides a ligand contact to a ribonucleoside 5'-triphosphate. The disordered stretch occupies residues 385–420 (DKNSQNDNGHGPTMETNTTENQKDNARGQSNKGHGF). Polar residues-rich tracts occupy residues 389 to 404 (QNDNGHGPTMETNTTE) and 411 to 420 (RGQSNKGHGF).

This sequence belongs to the eukaryotic-type primase small subunit family. As to quaternary structure, heterodimer of a catalytic subunit spp1/pri1 and a regulatory subunit spp2/pri2, also known as the DNA primase complex. Component of the alpha DNA polymerase complex (also known as the alpha DNA polymerase-primase complex) consisting of four subunits: the catalytic subunit pol1, the accessory subunit spb70/pol12, and the primase complex subunits spp1/pri1 and spp2/pri2 respectively. The cofactor is Mg(2+). Requires Mn(2+) as cofactor.

The protein resides in the nucleus. The enzyme catalyses ssDNA + n NTP = ssDNA/pppN(pN)n-1 hybrid + (n-1) diphosphate.. Catalytic subunit of the DNA primase complex and component of the DNA polymerase alpha complex (also known as the alpha DNA polymerase-primase complex - primosome/replisome) which play an essential role in the initiation of DNA synthesis. During the S phase of the cell cycle, the DNA polymerase alpha complex (composed of a catalytic subunit pol1, an accessory subunit spb70/pol12 and two primase subunits, the catalytic subunit spp1/pri1 and the regulatory subunit spp2/pri2) is recruited to DNA at the replicative forks. The primase subunit of the polymerase alpha complex initiates DNA synthesis by oligomerising short RNA primers on both leading and lagging strands. The polypeptide is DNA primase small subunit (Schizosaccharomyces pombe (strain 972 / ATCC 24843) (Fission yeast)).